Here is a 505-residue protein sequence, read N- to C-terminus: MVNIRPDEISNIIRQQIDNYDQEVQVANIGTVLQVGDGIARVYGLDEVMAGELLQFEDKEQTVGIALNLESDNVGVVLMGDGRNILEGSSVKSTGKIAQIPVGDEFLGRVVNPLAKPIDAKGTPSVQDTRLIESYAPGIIGRQSVCEPLQTGITAIDSMIPIGRGQRELIIGDRQTGKTTVALDTIINQKGQDVVCVYVAIGQKASSVAQVVSTLEEKGALEYTIVVAANADEPATLQYIAPYTGAALAEYFMYKGKATLVIYDDLTKQAQAYRQMSLLLRRPPGREAYPGDVFYLHSRLLERAAKLNQDLGGGSMTALPIIETQAGDVSAYIPTNVISITDGQIFLSGDLFNSGIRPAINVGISVSRVGSAAQIKAMKQVAGKLKLELAQFAELEAFSQFASDLDKATQNQLARGQRLREILKQAQNSPIPVEEQTAIIYAGINGYLDEVELSQVKDFVLALREDLRNSKPEFGESILSTKKLNPDSEEILKKAISDVAQAFSL.

172–179 (GDRQTGKT) serves as a coordination point for ATP.

Belongs to the ATPase alpha/beta chains family. As to quaternary structure, F-type ATPases have 2 components, CF(1) - the catalytic core - and CF(0) - the membrane proton channel. CF(1) has five subunits: alpha(3), beta(3), gamma(1), delta(1), epsilon(1). CF(0) has four main subunits: a, b, b' and c.

It is found in the plastid. Its subcellular location is the chloroplast thylakoid membrane. It carries out the reaction ATP + H2O + 4 H(+)(in) = ADP + phosphate + 5 H(+)(out). In terms of biological role, produces ATP from ADP in the presence of a proton gradient across the membrane. The alpha chain is a regulatory subunit. The protein is ATP synthase subunit alpha, chloroplastic of Antithamnion sp. (Red alga).